A 302-amino-acid chain; its full sequence is Recombination-associated protein RdgC (302 aa).

This sequence belongs to the RdgC family.

The protein resides in the cytoplasm. It is found in the nucleoid. May be involved in recombination. The polypeptide is Recombination-associated protein RdgC (Xylella fastidiosa (strain M23)).